We begin with the raw amino-acid sequence, 366 residues long: METSPLILLAAGGTGGHLFPAEALGVELIRRGFRVRLVTDERALRYSGLFSKDMIDVVSSETARGRNPFQVAYAGLTLAAGTLSAYSLIKRLKPVAVVGFGGYPTLPPLVAAKFAGVPGIIHDANAVLGRANRFLSSRVRAIATSLPGVLDRDPALSGKTTTVGTPMRPAVLAAAAVPYAAPEANGPLRLLVVGGSQGARIMADIVPGAIERLEPALWGRLILTQQVRDEDMNRVRAVYDKLKIKAELAPFFTDLPARLASNHLVVSRSGAGTVAELAAIGRPSILVPLPGSIDQDQFANAGVLAKVDGAIRIPQTEFTSDRLASEISALAAEPARLTAMAAAAKGAGRLDAAERLADLVVKVAGL.

Residues 14-16 (TGG), Asn-125, Arg-168, Ser-196, and Gln-297 each bind UDP-N-acetyl-alpha-D-glucosamine.

Belongs to the glycosyltransferase 28 family. MurG subfamily.

The protein resides in the cell inner membrane. It carries out the reaction di-trans,octa-cis-undecaprenyl diphospho-N-acetyl-alpha-D-muramoyl-L-alanyl-D-glutamyl-meso-2,6-diaminopimeloyl-D-alanyl-D-alanine + UDP-N-acetyl-alpha-D-glucosamine = di-trans,octa-cis-undecaprenyl diphospho-[N-acetyl-alpha-D-glucosaminyl-(1-&gt;4)]-N-acetyl-alpha-D-muramoyl-L-alanyl-D-glutamyl-meso-2,6-diaminopimeloyl-D-alanyl-D-alanine + UDP + H(+). The protein operates within cell wall biogenesis; peptidoglycan biosynthesis. Its function is as follows. Cell wall formation. Catalyzes the transfer of a GlcNAc subunit on undecaprenyl-pyrophosphoryl-MurNAc-pentapeptide (lipid intermediate I) to form undecaprenyl-pyrophosphoryl-MurNAc-(pentapeptide)GlcNAc (lipid intermediate II). The polypeptide is UDP-N-acetylglucosamine--N-acetylmuramyl-(pentapeptide) pyrophosphoryl-undecaprenol N-acetylglucosamine transferase (Bradyrhizobium diazoefficiens (strain JCM 10833 / BCRC 13528 / IAM 13628 / NBRC 14792 / USDA 110)).